A 637-amino-acid polypeptide reads, in one-letter code: MNTYAAYIDYALKKLDTFPVDMTGGNDNTVLLKDYQLFVAKVFLGLNSMNSILLFQETGVGKTITTVYMLKNLKKIYSEWTIIILVKKALIDDPWTHTILDYAPEVMKDCIIMNYDDQNFHNKFFTNIKSINVKSRIFIIIDECHNFISKSLTKEDNKKRNTKLVYNYIAKNLMQKNNKLICLSATPIVNDVREFQMLVNLLRPGILTPDKSLFYNKKLIDEKEIISKLGCICSYIVNNEASIFEDVENTTLFAKKTVHIKHVFMSKKQEELYLKARYLERKLGISVFKIYQRMASTFVFDDIPDKKKLTEEEYEKFVDSLSIDFKNTLYGKKISKQSLDILSAGGTINDIKDVKDIELYNYLYEHSCKFTFVCVSIIQSKGKCLVFEPFIRSSGIEILLQYFNVFGITYIEFSSRTKDIRSKSVSDFNKVDNTDGEITKVCVFSQSGNEGISFLSINDIFILDMTWNEASLKQIIGRAIRLNSHVNNPPERRYVNVYFVVAKLSSGRSSVDDILLDIIQSKSKEFSQLYKVFKHSSIEWIYSNYTDFQTVDDEKGFKKLISRNIILDENTITNKKKLTMGENIWYSFSSSLVSIHRGFKSMDNKIYDSEGFFITVLPDKPTIKIYEGKLIYILTVR.

Residues 43–205 form the Helicase ATP-binding domain; sequence FLGLNSMNSI…QMLVNLLRPG (163 aa). 56-63 serves as a coordination point for ATP; it reads QETGVGKT. Positions 142–145 match the DEXH box motif; the sequence is DECH. Positions 358 to 537 constitute a Helicase C-terminal domain; the sequence is ELYNYLYEHS…QLYKVFKHSS (180 aa). The interval 459-526 is binding to the cap-specific mRNA (nucleoside-2'-O-)-methyltransferase; that stretch reads DIFILDMTWN…DIIQSKSKEF (68 aa).

The protein belongs to the helicase family. NPH I subfamily. Monomer. Interacts (via C-terminus) with RAP94 (via N-terminus). Interacts with the cap-specific mRNA (nucleoside-2'-O-)-methyltransferase.

The protein localises to the virion. It catalyses the reaction a ribonucleoside 5'-triphosphate + H2O = a ribonucleoside 5'-diphosphate + phosphate + H(+). Its function is as follows. DNA-dependent ATPase required for providing the needed energy to achieve the termination of early transcripts. Acts in concert with the RAP94 subunit of the virion RNA polymerase and the capping enzyme/VTF to catalyze release of UUUUUNU-containing nascent RNA from the elongation complex. NPH-I must bind ssDNA in order to exhibit ATPase activity. The protein is Nucleoside triphosphatase I (NPH1) of Vertebrata (FPV).